The sequence spans 37 residues: Large ribosomal subunit protein bL36 (37 aa).

It belongs to the bacterial ribosomal protein bL36 family.

The polypeptide is Large ribosomal subunit protein bL36 (Aromatoleum aromaticum (strain DSM 19018 / LMG 30748 / EbN1) (Azoarcus sp. (strain EbN1))).